The sequence spans 37 residues: MVEPLLSGIILGLIPVTLSGLLVAAYLQYQRGNQLGL.

Residues leucine 5–alanine 25 form a helical membrane-spanning segment.

The protein belongs to the PetG family. The 4 large subunits of the cytochrome b6-f complex are cytochrome b6, subunit IV (17 kDa polypeptide, PetD), cytochrome f and the Rieske protein, while the 4 small subunits are PetG, PetL, PetM and PetN. The complex functions as a dimer.

The protein resides in the plastid. Its subcellular location is the chloroplast thylakoid membrane. Functionally, component of the cytochrome b6-f complex, which mediates electron transfer between photosystem II (PSII) and photosystem I (PSI), cyclic electron flow around PSI, and state transitions. PetG is required for either the stability or assembly of the cytochrome b6-f complex. The chain is Cytochrome b6-f complex subunit 5 from Porphyra purpurea (Red seaweed).